Here is a 201-residue protein sequence, read N- to C-terminus: MAENLANHLLDEMIEALSSLPGIGRKSAFRISFHLLRLEQGLFNQFIHQLTDTKNKIKFCKRCGSYAETEICEICVSEKRDSHTFCVVEQPEDIFFIENTREFQGKYHVLNGVISPLEGIGPRDLRIKELLERIEPEQVKEVLIATNPTLEGDATADYLANQLKPISVNVTRIAYGITVGGSIELADQYTLGRAIRSRLQL.

The C4-type zinc finger occupies 60–75; sequence CKRCGSYAETEICEIC. In terms of domain architecture, Toprim spans 83–178; it reads HTFCVVEQPE…NVTRIAYGIT (96 aa).

The protein belongs to the RecR family.

Functionally, may play a role in DNA repair. It seems to be involved in an RecBC-independent recombinational process of DNA repair. It may act with RecF and RecO. The sequence is that of Recombination protein RecR from Leptospira interrogans serogroup Icterohaemorrhagiae serovar copenhageni (strain Fiocruz L1-130).